The following is a 230-amino-acid chain: Demethylmenaquinone methyltransferase (230 aa).

S-adenosyl-L-methionine is bound by residues Thr-57, Asp-77, 101-102 (DI), and Ser-118.

The protein belongs to the class I-like SAM-binding methyltransferase superfamily. MenG/UbiE family.

It catalyses the reaction a 2-demethylmenaquinol + S-adenosyl-L-methionine = a menaquinol + S-adenosyl-L-homocysteine + H(+). It participates in quinol/quinone metabolism; menaquinone biosynthesis; menaquinol from 1,4-dihydroxy-2-naphthoate: step 2/2. In terms of biological role, methyltransferase required for the conversion of demethylmenaquinol (DMKH2) to menaquinol (MKH2). This Chlamydia caviae (strain ATCC VR-813 / DSM 19441 / 03DC25 / GPIC) (Chlamydophila caviae) protein is Demethylmenaquinone methyltransferase.